Consider the following 54-residue polypeptide: Potassium channel toxin alpha-KTx 14.1 (54 aa).

The signal sequence occupies residues 1 to 23 (MKIFFAILLILAVCSMAIWTVNG).

Belongs to the short scorpion toxin superfamily. Potassium channel inhibitor family. Alpha-KTx 14 subfamily. Probably has three disulfide bridges. As to expression, expressed by the venom gland.

The protein localises to the secreted. Potential blocker of potassium channels. This is Potassium channel toxin alpha-KTx 14.1 from Olivierus martensii (Manchurian scorpion).